The primary structure comprises 758 residues: Putative transcriptional regulatory protein YJL206C (758 aa).

A DNA-binding region (zn(2)-C6 fungal-type) is located at residues 47–73; the sequence is CIACRKRKVRCSGNIPCRLCQTNSYEC.

It belongs to the ASG1 family.

The protein resides in the nucleus. This Saccharomyces cerevisiae (strain ATCC 204508 / S288c) (Baker's yeast) protein is Putative transcriptional regulatory protein YJL206C.